The sequence spans 488 residues: Protein kinase C and casein kinase substrate in neurons 2 protein (488 aa).

An F-BAR domain is found at 11-282 (VEVSSDSFWE…SIKAADAVED (272 aa)). A coiled-coil region spans residues 25 to 274 (KRTVKRIDDG…GIYRELEQSI (250 aa)). Lys53 is modified (N6-acetyllysine). Residues 163 to 176 (CKEEKLAVSREANS) show a composition bias toward basic and acidic residues. The disordered stretch occupies residues 163–183 (CKEEKLAVSREANSKADPSLN). Ser273 carries the post-translational modification Phosphoserine. Ser315 carries the phosphoserine; by PKC modification. Residues 316–429 (RREKKKAADG…PFDEDTTSGT (114 aa)) form a disordered region. Residues 329-364 (TGINQTGDQSGQNKPSSNLSVPSNPAQSTQLQSSYN) show a composition bias toward polar residues. Residues 364-366 (NPF) carry the NPF1 motif. Residue Ser375 is modified to Phosphoserine; by IKKB. The span at 386 to 396 (NVSSYEKTQNY) shows a compositional bias: polar residues. A Phosphoserine modification is found at Ser401. Residues 406–418 (NNPFSSTDANGDS) show a composition bias toward polar residues. The NPF2 signature appears at 407-409 (NPF). An NPF3 motif is present at residues 419–421 (NPF). The SH3 domain occupies 428–488 (GTEVRVRALY…YPANYVEAIQ (61 aa)). The residue at position 448 (Ser448) is a Phosphoserine.

Belongs to the PACSIN family. In terms of assembly, homodimer. May form heterooligomers with other PACSINs. Interacts (via NPF motifs) with EHD1 (via EH domain). Interacts with EHD3. Interacts (via the SH3 domain) with MICALL1. Interacts with RAC1. Interacts (via SH3 domain) with DNM1, SYN1, SYNJ1 and WASL. Interacts with CAV1. Interacts with TRPV4. Forms a complex with EHD4 and MICALL1; the complex controls CDH5 trafficking and coordinates angiogenesis. Phosphorylated by casein kinase 2 (CK2) and protein kinase C (PKC). Phosphorylation by PKC probably decreases the membrane binding and tubulation capacities of PACSIN2, thereby modulating the lifetime of caveolae. In terms of tissue distribution, widely expressed (at protein level). Isoforms 1/3 are predominantly expressed in heart and in PC-12 cells, a pheochromocytoma cell line (at protein level). Isoforms 2/4 are widely expressed with highest levels in muscle, testis and brain (at protein level).

It is found in the cytoplasm. The protein resides in the cytoskeleton. The protein localises to the cytoplasmic vesicle membrane. It localises to the cell projection. Its subcellular location is the ruffle membrane. It is found in the early endosome. The protein resides in the recycling endosome membrane. The protein localises to the cell membrane. It localises to the membrane. Its subcellular location is the caveola. It is found in the cell junction. The protein resides in the adherens junction. In terms of biological role, regulates the morphogenesis and endocytosis of caveolae. Lipid-binding protein that is able to promote the tubulation of the phosphatidic acid-containing membranes it preferentially binds. Plays a role in intracellular vesicle-mediated transport. Involved in the endocytosis of cell-surface receptors like the EGF receptor, contributing to its internalization in the absence of EGF stimulus. Facilitates endothelial front-rear polarity during migration by recruiting EHD4 and MICALL1 to asymmetric adherens junctions between leader and follower cells. The protein is Protein kinase C and casein kinase substrate in neurons 2 protein (Pacsin2) of Rattus norvegicus (Rat).